Here is a 259-residue protein sequence, read N- to C-terminus: Proteasome assembly chaperone 2 (259 aa).

Belongs to the PSMG2 family. As to quaternary structure, forms a heterodimer with psmg1. Post-translationally, degraded by the proteasome upon completion of 20S proteasome maturation.

Its subcellular location is the nucleus. In terms of biological role, chaperone protein which promotes assembly of the 20S proteasome as part of a heterodimer with psmg1. The polypeptide is Proteasome assembly chaperone 2 (Xenopus laevis (African clawed frog)).